The primary structure comprises 710 residues: Elongation factor G (710 aa).

The 283-residue stretch at 8-290 (SQYRNIGISA…AIVEYLPSPM (283 aa)) folds into the tr-type G domain. Residues 17 to 24 (AHIDAGKT), 88 to 92 (DTPGH), and 142 to 145 (NKMD) contribute to the GTP site.

This sequence belongs to the TRAFAC class translation factor GTPase superfamily. Classic translation factor GTPase family. EF-G/EF-2 subfamily.

The protein localises to the cytoplasm. In terms of biological role, catalyzes the GTP-dependent ribosomal translocation step during translation elongation. During this step, the ribosome changes from the pre-translocational (PRE) to the post-translocational (POST) state as the newly formed A-site-bound peptidyl-tRNA and P-site-bound deacylated tRNA move to the P and E sites, respectively. Catalyzes the coordinated movement of the two tRNA molecules, the mRNA and conformational changes in the ribosome. This Buchnera aphidicola subsp. Baizongia pistaciae (strain Bp) protein is Elongation factor G.